The chain runs to 450 residues: UDP-N-acetylmuramoylalanine--D-glutamate ligase (450 aa).

Residue 119-125 (GSNGKTT) participates in ATP binding.

This sequence belongs to the MurCDEF family.

It localises to the cytoplasm. The catalysed reaction is UDP-N-acetyl-alpha-D-muramoyl-L-alanine + D-glutamate + ATP = UDP-N-acetyl-alpha-D-muramoyl-L-alanyl-D-glutamate + ADP + phosphate + H(+). The protein operates within cell wall biogenesis; peptidoglycan biosynthesis. Cell wall formation. Catalyzes the addition of glutamate to the nucleotide precursor UDP-N-acetylmuramoyl-L-alanine (UMA). The sequence is that of UDP-N-acetylmuramoylalanine--D-glutamate ligase from Bacillus mycoides (strain KBAB4) (Bacillus weihenstephanensis).